A 92-amino-acid chain; its full sequence is Small ribosomal subunit protein uS19 (92 aa).

A disordered region spans residues 73 to 92 (EFSPTRSFRGHAGAKNKGKK). The segment covering 80–92 (FRGHAGAKNKGKK) has biased composition (basic residues).

Belongs to the universal ribosomal protein uS19 family.

Functionally, protein S19 forms a complex with S13 that binds strongly to the 16S ribosomal RNA. This chain is Small ribosomal subunit protein uS19, found in Flavobacterium psychrophilum (strain ATCC 49511 / DSM 21280 / CIP 103535 / JIP02/86).